Reading from the N-terminus, the 83-residue chain is Large ribosomal subunit protein eL14 (83 aa).

The protein belongs to the eukaryotic ribosomal protein eL14 family.

The polypeptide is Large ribosomal subunit protein eL14 (Thermococcus gammatolerans (strain DSM 15229 / JCM 11827 / EJ3)).